We begin with the raw amino-acid sequence, 560 residues long: Formate--tetrahydrofolate ligase (560 aa).

69-76 (TPAGEGKS) contacts ATP.

The protein belongs to the formate--tetrahydrofolate ligase family.

The catalysed reaction is (6S)-5,6,7,8-tetrahydrofolate + formate + ATP = (6R)-10-formyltetrahydrofolate + ADP + phosphate. The protein operates within one-carbon metabolism; tetrahydrofolate interconversion. The sequence is that of Formate--tetrahydrofolate ligase from Listeria monocytogenes serotype 4b (strain CLIP80459).